A 187-amino-acid chain; its full sequence is Auxin-binding protein T92 (187 aa).

The signal sequence occupies residues M1 to S20. A disulfide bridge links C22 with C177. Positions 78, 80, and 84 each coordinate Zn(2+). A glycan (N-linked (GlcNAc...) asparagine) is linked at N117. H128 contacts Zn(2+). The Prevents secretion from ER signature appears at K184–L187.

Homodimer.

It is found in the endoplasmic reticulum lumen. In terms of biological role, this is probably a receptor for the plant hormone auxin. This is Auxin-binding protein T92 (T92) from Nicotiana tabacum (Common tobacco).